Here is a 626-residue protein sequence, read N- to C-terminus: Basic helix-loop-helix ARNT-like protein 1 (626 aa).

The segment at 1–60 (MADQRMDISSTISDFMSPGATDLLSSPLGTSGMDCNRKRKGSSTDYQESMDTDKDDPHGR) is disordered. A Phosphoserine; by GSK3-beta modification is found at Ser17. Position 21 is a phosphothreonine; by GSK3-beta (Thr21). Residues 36 to 41 (NRKRKG) carry the Nuclear localization signal motif. Basic and acidic residues predominate over residues 51 to 60 (DTDKDDPHGR). The 54-residue stretch at 72-125 (NAREAHSQIEKRRRDKMNSFIDELASLVPTCNAMSRKLDKLTVLRMAVQHMKTL) folds into the bHLH domain. Residue Ser78 is modified to Phosphoserine. Phosphoserine; by CK2 is present on Ser90. The Nuclear export signal 1 motif lies at 142–152 (LSDDELKHLIL). The PAS 1 domain occupies 143–215 (SDDELKHLIL…EQLSSSDTAP (73 aa)). Lys252 participates in a covalent cross-link: Glycyl lysine isopeptide (Lys-Gly) (interchain with G-Cter in SUMO2 and SUMO3). Lys259 participates in a covalent cross-link: Glycyl lysine isopeptide (Lys-Gly) (interchain with G-Cter in SUMO); alternate. Residue Lys259 forms a Glycyl lysine isopeptide (Lys-Gly) (interchain with G-Cter in SUMO2); alternate linkage. One can recognise a PAS 2 domain in the interval 326–396 (PQPVNGEIRV…ECHRQVLQTR (71 aa)). The Nuclear export signal 2 motif lies at 361–369 (LAYLPQELL). The 44-residue stretch at 401–444 (TNCYKFKIKDGSFITLRSRWFSFMNPWTKEVEYIVSTNTVVLAN) folds into the PAC domain. 2 disordered regions span residues 457 to 493 (TASP…AGAG) and 510 to 597 (RGSS…SNDE). Gly residues predominate over residues 484-493 (IPGGTRAGAG). Positions 508–588 (RIRGSSPSSC…IGIDMIDNDQ (81 aa)) are interaction with CIART. Residues 511 to 521 (GSSPSSCGSSP) show a composition bias toward low complexity. Residue Lys538 is modified to N6-acetyllysine.

In terms of assembly, component of the circadian clock oscillator which includes the CRY1/2 proteins, CLOCK or NPAS2, BMAL1 or BMAL2, CSNK1D and/or CSNK1E, TIMELESS and the PER1/2/3 proteins. Forms a heterodimer with CLOCK. The CLOCK-BMAL1 heterodimer is required for E-box-dependent transactivation, for CLOCK nuclear translocation and degradation, and, for phosphorylation of both CLOCK and BMAL1. Part of a nuclear complex which also includes RACK1 and PRKCA; RACK1 and PRKCA are recruited to the complex in a circadian manner. Interacts with NPAS2. Interacts with EZH2. Interacts with SUMO3. Interacts with SIRT1. Interacts with AHR. Interacts with ID1, ID2 and ID3. Interacts with DDX4. Interacts with OGT. Interacts with EED and SUZ12. Interacts with MTA1. Interacts with CIART. Interacts with HSP90. Interacts with KAT2B and EP300. Interacts with BHLHE40/DEC1 and BHLHE41/DEC2. Interacts with RELB and the interaction is enhanced in the presence of CLOCK. Interacts with PER1, PER2, CRY1 and CRY2 and this interaction requires a translocation to the nucleus. Interaction of the CLOCK-BMAL1 heterodimer with PER or CRY inhibits transcription activation. Interaction of the CLOCK-BMAL1 with CRY1 is independent of DNA but with PER2 is off DNA. The CLOCK-BMAL1 heterodimer interacts with GSK3B. Interacts with KDM5A. Interacts with KMT2A; in a circadian manner. Interacts with UBE3A. Interacts with PRKCG. Interacts with MAGEL2. Interacts with NCOA2. Interacts with THRAP3. The CLOCK-BMAL1 heterodimer interacts with PASD1. Interacts with PASD1. Interacts with USP9X. Interacts with PIWIL2 (via PIWI domain). Interacts with HDAC3. Interacts with HNF4A. Post-translationally, ubiquitinated, leading to its proteasomal degradation. Deubiquitinated by USP9X. O-glycosylated; contains O-GlcNAc. O-glycosylation by OGT prevents protein degradation by inhibiting ubiquitination. It also stabilizes the CLOCK-BMAL1 heterodimer thereby increasing CLOCK-BMAL1-mediated transcription of genes in the negative loop of the circadian clock such as PER1/2/3 and CRY1/2. In terms of processing, acetylated on Lys-538 by CLOCK during the repression phase of the circadian cycle. Acetylation facilitates recruitment of CRY1 protein and initiates the repression phase of the circadian cycle. Acetylated at Lys-538 by KAT5 during the activation phase of the cycle, leading to recruitment of the positive transcription elongation factor b (P-TEFb) and BRD4, followed by productive elongation of circadian transcripts. Deacetylated by SIRT1, which may result in decreased protein stability. Post-translationally, phosphorylated upon dimerization with CLOCK. Phosphorylation enhances the transcriptional activity, alters the subcellular localization and decreases the stability of the CLOCK-BMAL1 heterodimer by promoting its degradation. Phosphorylation shows circadian variations in the liver with a peak between CT10 to CT14. Phosphorylation at Ser-90 by CK2 is essential for its nuclear localization, its interaction with CLOCK and controls CLOCK nuclear entry. Dephosphorylation at Ser-78 is important for dimerization with CLOCK and transcriptional activity. Sumoylated on Lys-259 upon dimerization with CLOCK. Predominantly conjugated to poly-SUMO2/3 rather than SUMO1 and the level of these conjugates undergo rhythmic variation, peaking at CT9-CT12. Sumoylation localizes it exclusively to the PML body and promotes its ubiquitination in the PML body, ubiquitin-dependent proteasomal degradation and the transcriptional activity of the CLOCK-BMAL1 heterodimer. In terms of processing, undergoes lysosome-mediated degradation in a time-dependent manner in the liver.

The protein localises to the nucleus. It localises to the cytoplasm. Its subcellular location is the PML body. Functionally, transcriptional activator which forms a core component of the circadian clock. The circadian clock, an internal time-keeping system, regulates various physiological processes through the generation of approximately 24 hour circadian rhythms in gene expression, which are translated into rhythms in metabolism and behavior. It is derived from the Latin roots 'circa' (about) and 'diem' (day) and acts as an important regulator of a wide array of physiological functions including metabolism, sleep, body temperature, blood pressure, endocrine, immune, cardiovascular, and renal function. Consists of two major components: the central clock, residing in the suprachiasmatic nucleus (SCN) of the brain, and the peripheral clocks that are present in nearly every tissue and organ system. Both the central and peripheral clocks can be reset by environmental cues, also known as Zeitgebers (German for 'timegivers'). The predominant Zeitgeber for the central clock is light, which is sensed by retina and signals directly to the SCN. The central clock entrains the peripheral clocks through neuronal and hormonal signals, body temperature and feeding-related cues, aligning all clocks with the external light/dark cycle. Circadian rhythms allow an organism to achieve temporal homeostasis with its environment at the molecular level by regulating gene expression to create a peak of protein expression once every 24 hours to control when a particular physiological process is most active with respect to the solar day. Transcription and translation of core clock components (CLOCK, NPAS2, BMAL1, BMAL2, PER1, PER2, PER3, CRY1 and CRY2) plays a critical role in rhythm generation, whereas delays imposed by post-translational modifications (PTMs) are important for determining the period (tau) of the rhythms (tau refers to the period of a rhythm and is the length, in time, of one complete cycle). A diurnal rhythm is synchronized with the day/night cycle, while the ultradian and infradian rhythms have a period shorter and longer than 24 hours, respectively. Disruptions in the circadian rhythms contribute to the pathology of cardiovascular diseases, cancer, metabolic syndromes and aging. A transcription/translation feedback loop (TTFL) forms the core of the molecular circadian clock mechanism. Transcription factors, CLOCK or NPAS2 and BMAL1 or BMAL2, form the positive limb of the feedback loop, act in the form of a heterodimer and activate the transcription of core clock genes and clock-controlled genes (involved in key metabolic processes), harboring E-box elements (5'-CACGTG-3') within their promoters. The core clock genes: PER1/2/3 and CRY1/2 which are transcriptional repressors form the negative limb of the feedback loop and interact with the CLOCK|NPAS2-BMAL1|BMAL2 heterodimer inhibiting its activity and thereby negatively regulating their own expression. This heterodimer also activates nuclear receptors NR1D1, NR1D2, RORA, RORB and RORG, which form a second feedback loop and which activate and repress BMAL1 transcription, respectively. BMAL1 positively regulates myogenesis and negatively regulates adipogenesis via the transcriptional control of the genes of the canonical Wnt signaling pathway. Plays a role in normal pancreatic beta-cell function; regulates glucose-stimulated insulin secretion via the regulation of antioxidant genes NFE2L2/NRF2 and its targets SESN2, PRDX3, CCLC and CCLM. Negatively regulates the mTORC1 signaling pathway; regulates the expression of MTOR and DEPTOR. Controls diurnal oscillations of Ly6C inflammatory monocytes; rhythmic recruitment of the PRC2 complex imparts diurnal variation to chemokine expression that is necessary to sustain Ly6C monocyte rhythms. Regulates the expression of HSD3B2, STAR, PTGS2, CYP11A1, CYP19A1 and LHCGR in the ovary and also the genes involved in hair growth. Plays an important role in adult hippocampal neurogenesis by regulating the timely entry of neural stem/progenitor cells (NSPCs) into the cell cycle and the number of cell divisions that take place prior to cell-cycle exit. Regulates the circadian expression of CIART. The CLOCK-BMAL1 heterodimer regulates the circadian expression of SERPINE1/PAI1, VWF, B3, CCRN4L/NOC, NAMPT, DBP, MYOD1, PPARGC1A, PPARGC1B, SIRT1, GYS2, F7, NGFR, GNRHR, BHLHE40/DEC1, ATF4, MTA1 and also genes implicated in glucose and lipid metabolism. Promotes rhythmic chromatin opening, regulating the DNA accessibility of other transcription factors. The NPAS2-BMAL1 heterodimer positively regulates the expression of MAOA, F7 and LDHA and modulates the circadian rhythm of daytime contrast sensitivity by regulating the rhythmic expression of adenylate cyclase type 1 (ADCY1) in the retina. The preferred binding motif for the CLOCK-BMAL1 heterodimer is 5'-CACGTGA-3', which contains a flanking adenine nucleotide at the 3-prime end of the canonical 6-nucleotide E-box sequence. CLOCK specifically binds to the half-site 5'-CAC-3', while BMAL1 binds to the half-site 5'-GTGA-3'. The CLOCK-BMAL1 heterodimer also recognizes the non-canonical E-box motifs 5'-AACGTGA-3' and 5'-CATGTGA-3'. Essential for the rhythmic interaction of CLOCK with ASS1 and plays a critical role in positively regulating CLOCK-mediated acetylation of ASS1. Plays a role in protecting against lethal sepsis by limiting the expression of immune checkpoint protein CD274 in macrophages in a PKM2-dependent manner. Regulates the diurnal rhythms of skeletal muscle metabolism via transcriptional activation of genes promoting triglyceride synthesis (DGAT2) and metabolic efficiency (COQ10B). This is Basic helix-loop-helix ARNT-like protein 1 (BMAL1) from Equus caballus (Horse).